The following is a 171-amino-acid chain: S-ribosylhomocysteine lyase (171 aa).

Fe cation-binding residues include H54, H58, and C128.

Belongs to the LuxS family. In terms of assembly, homodimer. Requires Fe cation as cofactor.

It carries out the reaction S-(5-deoxy-D-ribos-5-yl)-L-homocysteine = (S)-4,5-dihydroxypentane-2,3-dione + L-homocysteine. In terms of biological role, involved in the synthesis of autoinducer 2 (AI-2) which is secreted by bacteria and is used to communicate both the cell density and the metabolic potential of the environment. The regulation of gene expression in response to changes in cell density is called quorum sensing. Catalyzes the transformation of S-ribosylhomocysteine (RHC) to homocysteine (HC) and 4,5-dihydroxy-2,3-pentadione (DPD). This chain is S-ribosylhomocysteine lyase, found in Escherichia coli (strain 55989 / EAEC).